The sequence spans 87 residues: CRISPR-associated endoribonuclease Cas2 (87 aa).

Asp-8 is a binding site for Mg(2+).

It belongs to the CRISPR-associated endoribonuclease Cas2 protein family. Homodimer, forms a heterotetramer with a Cas1 homodimer. Mg(2+) is required as a cofactor.

In terms of biological role, CRISPR (clustered regularly interspaced short palindromic repeat), is an adaptive immune system that provides protection against mobile genetic elements (viruses, transposable elements and conjugative plasmids). CRISPR clusters contain sequences complementary to antecedent mobile elements and target invading nucleic acids. CRISPR clusters are transcribed and processed into CRISPR RNA (crRNA). Functions as a ssRNA-specific endoribonuclease. Involved in the integration of spacer DNA into the CRISPR cassette. The sequence is that of CRISPR-associated endoribonuclease Cas2 from Frankia alni (strain DSM 45986 / CECT 9034 / ACN14a).